A 305-amino-acid polypeptide reads, in one-letter code: Elongation factor Ts (305 aa).

Residues 81–84 (TDFV) form an involved in Mg(2+) ion dislocation from EF-Tu region.

The protein belongs to the EF-Ts family.

The protein resides in the cytoplasm. In terms of biological role, associates with the EF-Tu.GDP complex and induces the exchange of GDP to GTP. It remains bound to the aminoacyl-tRNA.EF-Tu.GTP complex up to the GTP hydrolysis stage on the ribosome. This Nitratiruptor sp. (strain SB155-2) protein is Elongation factor Ts.